Reading from the N-terminus, the 185-residue chain is MSRLSIHPEGSTNATSPAEPLLESDDPAVIKVELAKRGIAFQRWPAKVKLDQNSSESDILAAYAVEIARVQADGRYPTVDAIRITPDHPDREALRQKFLDEHTHAEDEVRFFVEGCGLFCLHIGAEVLQVLCEQNDCINVPAGTRHWFDMGSKPQFCAVRFFDNPEGWIANFTGDAIAERFAKLP.

Positions 1-22 (MSRLSIHPEGSTNATSPAEPLL) are disordered. Positions 102, 104, 108, and 146 each coordinate Fe(2+). 4 residues coordinate Ni(2+): His102, His104, Glu108, and His146.

Belongs to the acireductone dioxygenase (ARD) family. Monomer. The cofactor is Fe(2+). Requires Ni(2+) as cofactor.

It carries out the reaction 1,2-dihydroxy-5-(methylsulfanyl)pent-1-en-3-one + O2 = 3-(methylsulfanyl)propanoate + CO + formate + 2 H(+). The catalysed reaction is 1,2-dihydroxy-5-(methylsulfanyl)pent-1-en-3-one + O2 = 4-methylsulfanyl-2-oxobutanoate + formate + 2 H(+). It participates in amino-acid biosynthesis; L-methionine biosynthesis via salvage pathway; L-methionine from S-methyl-5-thio-alpha-D-ribose 1-phosphate: step 5/6. Catalyzes 2 different reactions between oxygen and the acireductone 1,2-dihydroxy-3-keto-5-methylthiopentene (DHK-MTPene) depending upon the metal bound in the active site. Fe-containing acireductone dioxygenase (Fe-ARD) produces formate and 2-keto-4-methylthiobutyrate (KMTB), the alpha-ketoacid precursor of methionine in the methionine recycle pathway. Ni-containing acireductone dioxygenase (Ni-ARD) produces methylthiopropionate, carbon monoxide and formate, and does not lie on the methionine recycle pathway. The sequence is that of Acireductone dioxygenase from Prochlorococcus marinus (strain MIT 9313).